Consider the following 139-residue polypeptide: D-ribose pyranase (139 aa).

His-20 serves as the catalytic Proton donor. Substrate is bound by residues Asp-28, His-106, and 128 to 130; that span reads YAN.

This sequence belongs to the RbsD / FucU family. RbsD subfamily. Homodecamer.

The protein resides in the cytoplasm. It carries out the reaction beta-D-ribopyranose = beta-D-ribofuranose. The protein operates within carbohydrate metabolism; D-ribose degradation; D-ribose 5-phosphate from beta-D-ribopyranose: step 1/2. In terms of biological role, catalyzes the interconversion of beta-pyran and beta-furan forms of D-ribose. The protein is D-ribose pyranase of Escherichia coli O127:H6 (strain E2348/69 / EPEC).